Here is a 73-residue protein sequence, read N- to C-terminus: Crustacean hyperglycemic hormone (73 aa).

3 disulfides stabilise this stretch: Cys7-Cys43, Cys23-Cys39, and Cys26-Cys52. Position 73 is a valine amide (Val73).

The protein belongs to the arthropod CHH/MIH/GIH/VIH hormone family. Produced by the medulla terminalis X-organ in the eyestalks and transported to the sinus gland where they are stored and released.

The protein localises to the secreted. Functionally, hormone found in the sinus gland of isopods and decapods which controls the blood sugar level. Has a secretagogue action over the amylase released from the midgut gland. May act as a stress hormone and may be involved in the control of molting and reproduction. This Jasus lalandii (Cape rock lobster) protein is Crustacean hyperglycemic hormone.